A 622-amino-acid chain; its full sequence is Wall-associated receptor kinase-like 21 (622 aa).

The first 21 residues, 1–21 (MAETPQPYLIFVFFVFTLTVA), serve as a signal peptide directing secretion. The Extracellular segment spans residues 22–247 (TQTTGSVKCK…LVYKRKGLHK (226 aa)). Asparagine 50, asparagine 114, asparagine 131, asparagine 160, and asparagine 195 each carry an N-linked (GlcNAc...) asparagine glycan. A helical membrane pass occupies residues 248–268 (LVVLGTAGILVGVLVIVVLIA). Topologically, residues 269 to 622 (TYFFRNKQSA…MKRQQSFPRE (354 aa)) are cytoplasmic. The region spanning 314–594 (FSDKNMLGTG…EITEDLHRIK (281 aa)) is the Protein kinase domain. ATP-binding positions include 320–328 (LGTGAYGTV) and lysine 342. Catalysis depends on aspartate 439, which acts as the Proton acceptor.

This sequence belongs to the protein kinase superfamily. Ser/Thr protein kinase family.

Its subcellular location is the membrane. It carries out the reaction L-seryl-[protein] + ATP = O-phospho-L-seryl-[protein] + ADP + H(+). The catalysed reaction is L-threonyl-[protein] + ATP = O-phospho-L-threonyl-[protein] + ADP + H(+). Its function is as follows. Serine/threonine-protein kinase that may function as a signaling receptor of extracellular matrix component. The sequence is that of Wall-associated receptor kinase-like 21 (WAKL21) from Arabidopsis thaliana (Mouse-ear cress).